Here is a 447-residue protein sequence, read N- to C-terminus: MNLKTTLGLLAGRSSHFVLSRLGRGSTLPGKVALQFDKDILQSLAKNYEIVVVTGTNGKTLTTALTVGILKEVYGQVLTNPSGANMITGIATTFLTAKSSKTGKNIAVLEIDEASLSRICDYIQPSLFVITNIFRDQMDRFGEIYTTYNMILDAIRKVPTATVLLNGDSPLFYKPTIPNPIEYFGFDLEKGPAQLAHYNTEGILCPDCQGILKYEHNTYANLGAYICEGCGCKRPDLDYRLTKLVELTNNRSRFVIDGQEYGIQIGGLYNIYNALAAVAIARFLGADSQLIKQGFDKSRAVFGRQETFHIGDKECTLVLIKNPVGATQAIEMIKLAPYPFSLSVLLNANYADGIDTSWIWDADFEQITDMDIPEINAGGVRHSEIARRLRVTGYPAEKITETSNLEQVLKTIENQDCKHAYILATYTAMLEFRELLASRQIVRKEMN.

Cysteine 205, cysteine 208, cysteine 227, and cysteine 230 together coordinate Zn(2+). The active site involves aspartate 355.

Belongs to the MurCDEF family. MurT subfamily. As to quaternary structure, forms a heterodimer with GatD.

It catalyses the reaction beta-D-GlcNAc-(1-&gt;4)-Mur2Ac(oyl-L-Ala-gamma-D-Glu-L-Lys-D-Ala-D-Ala)-di-trans,octa-cis-undecaprenyl diphosphate + L-glutamine + ATP + H2O = beta-D-GlcNAc-(1-&gt;4)-Mur2Ac(oyl-L-Ala-D-isoglutaminyl-L-Lys-D-Ala-D-Ala)-di-trans,octa-cis-undecaprenyl diphosphate + L-glutamate + ADP + phosphate + H(+). The catalysed reaction is beta-D-GlcNAc-(1-&gt;4)-Mur2Ac(oyl-L-Ala-gamma-D-Glu-L-Lys-D-Ala-D-Ala)-di-trans,octa-cis-undecaprenyl diphosphate + ATP = beta-D-GlcNAc-(1-&gt;4)-Mur2Ac(oyl-L-Ala-gamma-D-O-P-Glu-L-Lys-D-Ala-D-Ala)-di-trans,octa-cis-undecaprenyl diphosphate + ADP. It carries out the reaction beta-D-GlcNAc-(1-&gt;4)-Mur2Ac(oyl-L-Ala-gamma-D-O-P-Glu-L-Lys-D-Ala-D-Ala)-di-trans,octa-cis-undecaprenyl diphosphate + NH4(+) = beta-D-GlcNAc-(1-&gt;4)-Mur2Ac(oyl-L-Ala-D-isoglutaminyl-L-Lys-D-Ala-D-Ala)-di-trans,octa-cis-undecaprenyl diphosphate + phosphate + H(+). The protein operates within cell wall biogenesis; peptidoglycan biosynthesis. Functionally, the lipid II isoglutaminyl synthase complex catalyzes the formation of alpha-D-isoglutamine in the cell wall lipid II stem peptide. The MurT subunit catalyzes the ATP-dependent amidation of D-glutamate residue of lipid II, converting it to an isoglutamine residue. This Streptococcus pneumoniae (strain ATCC BAA-255 / R6) protein is Lipid II isoglutaminyl synthase (glutamine-hydrolyzing) subunit MurT.